The primary structure comprises 275 residues: Gamma carbonic anhydrase 1, mitochondrial (275 aa).

The transit peptide at Met1–Arg43 directs the protein to the mitochondrion. Substrate contacts are provided by residues Arg86–Asp88 and Gln101–Asp102. His107, His130, and His135 together coordinate Zn(2+). Substrate is bound at residue Asn209. The tract at residues Leu256 to Asn275 is disordered. Residues Pro264–Asn275 show a composition bias toward basic and acidic residues.

The protein belongs to the gamma-class carbonic anhydrase family. Homotrimer. Component of the mitochondrial oxidoreductase respiratory chain complex I; element of the extra matrix-exposed domain, which is attached to the membrane arm of this complex. It depends on Zn(2+) as a cofactor.

Its subcellular location is the mitochondrion membrane. Its function is as follows. Enzyme involved in the catabolism of H(2)CO(3) but that does not mediates the reversible hydration of carbon dioxide. Mediates complex I assembly in mitochondria and respiration. The protein is Gamma carbonic anhydrase 1, mitochondrial (GAMMACA1) of Arabidopsis thaliana (Mouse-ear cress).